Reading from the N-terminus, the 523-residue chain is Metalloprotease TIKI2 (523 aa).

The first 26 residues, 1 to 26, serve as a signal peptide directing secretion; that stretch reads MGKTMWARAVFLCFSVGTLLWQEVLT. Residues 27–499 lie on the Extracellular side of the membrane; sequence RRIPVDTGQC…HSQSNSSPKC (473 aa). N-linked (GlcNAc...) asparagine glycosylation is found at N225, N234, N283, and N341. Residues 500–516 form a helical membrane-spanning segment; sequence LSASPAFLYTLVTLCLI. Topologically, residues 517–523 are cytoplasmic; it reads TTMRTRS.

It belongs to the TIKI family. Mn(2+) serves as cofactor. Co(2+) is required as a cofactor.

It is found in the cell membrane. Functionally, metalloprotease that acts as a negative regulator of the Wnt signaling pathway by mediating the cleavage of the N-terminal residues of a subset of Wnt proteins. Following cleavage, Wnt proteins become oxidized and form large disulfide-bond oligomers, leading to their inactivation. Able to cleave wnt8. Required for head formation. The polypeptide is Metalloprotease TIKI2 (trabd2b) (Xenopus tropicalis (Western clawed frog)).